The chain runs to 101 residues: Signal recognition particle 19 kDa protein (101 aa).

It belongs to the SRP19 family. Part of the signal recognition particle protein translocation system, which is composed of SRP and FtsY. Archaeal SRP consists of a 7S RNA molecule of 300 nucleotides and two protein subunits: SRP54 and SRP19.

It localises to the cytoplasm. Functionally, involved in targeting and insertion of nascent membrane proteins into the cytoplasmic membrane. Binds directly to 7S RNA and mediates binding of the 54 kDa subunit of the SRP. The sequence is that of Signal recognition particle 19 kDa protein from Methanosarcina acetivorans (strain ATCC 35395 / DSM 2834 / JCM 12185 / C2A).